Reading from the N-terminus, the 330-residue chain is Ketol-acid reductoisomerase (NADP(+)) (330 aa).

Residues 2–182 (VKIFYDKDVT…GLTKVGVIQT (181 aa)) form the KARI N-terminal Rossmann domain. NADP(+) contacts are provided by residues 25–28 (YGSQ), R48, S53, and 83–86 (DEVQ). The active site involves H108. An NADP(+)-binding site is contributed by G134. The 146-residue stretch at 183 to 328 (TFREETETDL…KELRKMCGLE (146 aa)) folds into the KARI C-terminal knotted domain. D191, E195, E227, and E231 together coordinate Mg(2+). S252 is a substrate binding site.

Belongs to the ketol-acid reductoisomerase family. It depends on Mg(2+) as a cofactor.

The catalysed reaction is (2R)-2,3-dihydroxy-3-methylbutanoate + NADP(+) = (2S)-2-acetolactate + NADPH + H(+). The enzyme catalyses (2R,3R)-2,3-dihydroxy-3-methylpentanoate + NADP(+) = (S)-2-ethyl-2-hydroxy-3-oxobutanoate + NADPH + H(+). It participates in amino-acid biosynthesis; L-isoleucine biosynthesis; L-isoleucine from 2-oxobutanoate: step 2/4. It functions in the pathway amino-acid biosynthesis; L-valine biosynthesis; L-valine from pyruvate: step 2/4. In terms of biological role, involved in the biosynthesis of branched-chain amino acids (BCAA). Catalyzes an alkyl-migration followed by a ketol-acid reduction of (S)-2-acetolactate (S2AL) to yield (R)-2,3-dihydroxy-isovalerate. In the isomerase reaction, S2AL is rearranged via a Mg-dependent methyl migration to produce 3-hydroxy-3-methyl-2-ketobutyrate (HMKB). In the reductase reaction, this 2-ketoacid undergoes a metal-dependent reduction by NADPH to yield (R)-2,3-dihydroxy-isovalerate. The polypeptide is Ketol-acid reductoisomerase (NADP(+)) (Methanocaldococcus jannaschii (strain ATCC 43067 / DSM 2661 / JAL-1 / JCM 10045 / NBRC 100440) (Methanococcus jannaschii)).